Here is a 471-residue protein sequence, read N- to C-terminus: 6-phosphofructo-2-kinase/fructose-2,6-bisphosphatase 1 (471 aa).

At Ser2 the chain carries N-acetylserine. The tract at residues 2-250 (SREMGELTQT…AYYLMNIHVT (249 aa)) is 6-phosphofructo-2-kinase. Ser33 carries the post-translational modification Phosphoserine; by PKA. Residue 49–57 (GLPARGKTY) coordinates ATP. The beta-D-fructose 6-phosphate site is built by Arg82 and Arg105. Asp131 is an active-site residue. Thr133 and Arg139 together coordinate beta-D-fructose 6-phosphate. Ser141 carries the phosphoserine modification. The active site involves Cys161. 170–175 (NIKQVK) contacts ATP. Beta-D-fructose 6-phosphate-binding residues include Lys175, Arg196, and Tyr200. The segment at 251–471 (PRSIYLCRHG…EALDTVPAHY (221 aa)) is fructose-2,6-bisphosphatase. Arg258 serves as a coordination point for beta-D-fructose 2,6-bisphosphate. His259 acts as the Tele-phosphohistidine intermediate in catalysis. The beta-D-fructose 2,6-bisphosphate site is built by Asn265, Gly271, and Arg308. Glu328 serves as the catalytic Proton donor/acceptor. Residues Tyr339, Arg353, Lys357, Tyr368, Gln394, and Arg398 each contribute to the beta-D-fructose 2,6-bisphosphate site. 350-353 (FALR) contributes to the ATP binding site. ATP is bound by residues 394-398 (QAVMR) and Tyr430.

In the C-terminal section; belongs to the phosphoglycerate mutase family. Homodimer. Liver.

The enzyme catalyses beta-D-fructose 2,6-bisphosphate + H2O = beta-D-fructose 6-phosphate + phosphate. It catalyses the reaction beta-D-fructose 6-phosphate + ATP = beta-D-fructose 2,6-bisphosphate + ADP + H(+). Phosphorylation at Ser-33 inhibits the kinase and activates the bisphosphatase. In terms of biological role, synthesis and degradation of fructose 2,6-bisphosphate. In Mus musculus (Mouse), this protein is 6-phosphofructo-2-kinase/fructose-2,6-bisphosphatase 1.